A 741-amino-acid chain; its full sequence is Zinc finger and BTB domain-containing protein 20 (741 aa).

The span at Met1–Glu17 shows a compositional bias: basic and acidic residues. Residues Met1–Gly32 form a disordered region. The BTB domain maps to Cys104–Gln167. Positions Gly203–His235 are disordered. A compositionally biased stretch (polar residues) spans Asp206–His235. Residue Thr211 is modified to Phosphothreonine. Lys330 participates in a covalent cross-link: Glycyl lysine isopeptide (Lys-Gly) (interchain with G-Cter in SUMO1); alternate. A Glycyl lysine isopeptide (Lys-Gly) (interchain with G-Cter in SUMO2); alternate cross-link involves residue Lys330. Residues Arg350–Glu440 are disordered. Position 353 is a phosphoserine (Ser353). Over residues Glu354–Glu367 the composition is skewed to acidic residues. At Thr357 the chain carries Phosphothreonine. Residue Lys371 forms a Glycyl lysine isopeptide (Lys-Gly) (interchain with G-Cter in SUMO2) linkage. The segment covering Ala404–Thr423 has biased composition (low complexity). The span at Asn424–Glu434 shows a compositional bias: polar residues. 4 C2H2-type zinc fingers span residues Tyr578–His600, His606–His628, Tyr634–His656, and Tyr662–His684. 2 positions are modified to phosphothreonine: Thr690 and Thr695. A C2H2-type 5 zinc finger spans residues Tyr715–His737. Residue Lys723 forms a Glycyl lysine isopeptide (Lys-Gly) (interchain with G-Cter in SUMO2) linkage.

Can homodimerize. Binds to DNA. In terms of processing, sumoylated with SUMO1. Expressed in spleen, lymph node, thymus, peripheral blood leukocytes, and fetal liver.

It is found in the nucleus. May be a transcription factor that may be involved in hematopoiesis, oncogenesis, and immune responses. Plays a role in postnatal myogenesis, may be involved in the regulation of satellite cells self-renewal. This chain is Zinc finger and BTB domain-containing protein 20 (ZBTB20), found in Homo sapiens (Human).